Here is a 149-residue protein sequence, read N- to C-terminus: 3-dehydroquinate dehydratase (149 aa).

The Proton acceptor role is filled by tyrosine 26. Asparagine 77, histidine 83, and aspartate 90 together coordinate substrate. Histidine 103 (proton donor) is an active-site residue. Residues 104–105 (LS) and arginine 114 each bind substrate.

This sequence belongs to the type-II 3-dehydroquinase family. In terms of assembly, homododecamer.

It carries out the reaction 3-dehydroquinate = 3-dehydroshikimate + H2O. The protein operates within metabolic intermediate biosynthesis; chorismate biosynthesis; chorismate from D-erythrose 4-phosphate and phosphoenolpyruvate: step 3/7. Its function is as follows. Catalyzes a trans-dehydration via an enolate intermediate. The chain is 3-dehydroquinate dehydratase from Haemophilus influenzae (strain PittGG).